We begin with the raw amino-acid sequence, 277 residues long: 4-hydroxy-3-methylbut-2-enyl diphosphate reductase (277 aa).

[4Fe-4S] cluster is bound at residue cysteine 12. (2E)-4-hydroxy-3-methylbut-2-enyl diphosphate is bound by residues histidine 36 and histidine 70. Residues histidine 36 and histidine 70 each coordinate dimethylallyl diphosphate. Positions 36 and 70 each coordinate isopentenyl diphosphate. Cysteine 92 provides a ligand contact to [4Fe-4S] cluster. Histidine 120 is a binding site for (2E)-4-hydroxy-3-methylbut-2-enyl diphosphate. Residue histidine 120 participates in dimethylallyl diphosphate binding. Histidine 120 provides a ligand contact to isopentenyl diphosphate. The active-site Proton donor is the glutamate 122. (2E)-4-hydroxy-3-methylbut-2-enyl diphosphate is bound at residue threonine 158. Cysteine 186 serves as a coordination point for [4Fe-4S] cluster. Residues serine 214, asparagine 216, and serine 258 each coordinate (2E)-4-hydroxy-3-methylbut-2-enyl diphosphate. Dimethylallyl diphosphate-binding residues include serine 214, asparagine 216, and serine 258. Isopentenyl diphosphate is bound by residues serine 214, asparagine 216, and serine 258.

It belongs to the IspH family. [4Fe-4S] cluster serves as cofactor.

The catalysed reaction is isopentenyl diphosphate + 2 oxidized [2Fe-2S]-[ferredoxin] + H2O = (2E)-4-hydroxy-3-methylbut-2-enyl diphosphate + 2 reduced [2Fe-2S]-[ferredoxin] + 2 H(+). It carries out the reaction dimethylallyl diphosphate + 2 oxidized [2Fe-2S]-[ferredoxin] + H2O = (2E)-4-hydroxy-3-methylbut-2-enyl diphosphate + 2 reduced [2Fe-2S]-[ferredoxin] + 2 H(+). It participates in isoprenoid biosynthesis; dimethylallyl diphosphate biosynthesis; dimethylallyl diphosphate from (2E)-4-hydroxy-3-methylbutenyl diphosphate: step 1/1. The protein operates within isoprenoid biosynthesis; isopentenyl diphosphate biosynthesis via DXP pathway; isopentenyl diphosphate from 1-deoxy-D-xylulose 5-phosphate: step 6/6. Catalyzes the conversion of 1-hydroxy-2-methyl-2-(E)-butenyl 4-diphosphate (HMBPP) into a mixture of isopentenyl diphosphate (IPP) and dimethylallyl diphosphate (DMAPP). Acts in the terminal step of the DOXP/MEP pathway for isoprenoid precursor biosynthesis. The protein is 4-hydroxy-3-methylbut-2-enyl diphosphate reductase of Campylobacter jejuni subsp. jejuni serotype O:2 (strain ATCC 700819 / NCTC 11168).